The following is a 267-amino-acid chain: PHD finger protein ALFIN-LIKE 7 (267 aa).

A disordered region spans residues 162-207; it reads TKVSNGSSKSNKSNPKPSKQSNSNSKPAKPPQPKDEEDSGPEGTED. Residues 165-188 show a composition bias toward low complexity; sequence SNGSSKSNKSNPKPSKQSNSNSKP. Positions 196–207 are enriched in acidic residues; the sequence is DEEDSGPEGTED. The PHD-type zinc-finger motif lies at 211–263; sequence AYMCGACGETYANGEFWICCDVCEKWFHGKCVRITPAKAEHIKQYKCPGCSSK.

Belongs to the Alfin family. As to quaternary structure, interacts with H3K4me3 and to a lesser extent with H3K4me2.

The protein resides in the nucleus. In terms of biological role, histone-binding component that specifically recognizes H3 tails trimethylated on 'Lys-4' (H3K4me3), which mark transcription start sites of virtually all active genes. In Oryza sativa subsp. japonica (Rice), this protein is PHD finger protein ALFIN-LIKE 7.